Reading from the N-terminus, the 225-residue chain is MMKKAVVLLSGGLDSATCLAIARSQGFESYCLSFNYGQRHCAELVAADRVVKALGAAEHRVLNFGLAQFGGSALTDTNIAVPTEGVQPGIPVTYVPARNTIMLSLALAWAEVLGSRDIFVGVNAVDYSGYPDCRPEYIAAFETMANLATKAGVEGHKLSIHAPLIDLSKAEIIRTGAALGVDYSLTVSCYQADEQGRACGVCDSCRLRAEGFAAAGLADPTLYRA.

An ATP-binding site is contributed by 9–19; the sequence is LSGGLDSATCL. The Zn(2+) site is built by Cys-189, Cys-199, Cys-202, and Cys-205.

It belongs to the QueC family. The cofactor is Zn(2+).

The enzyme catalyses 7-carboxy-7-deazaguanine + NH4(+) + ATP = 7-cyano-7-deazaguanine + ADP + phosphate + H2O + H(+). Its pathway is purine metabolism; 7-cyano-7-deazaguanine biosynthesis. In terms of biological role, catalyzes the ATP-dependent conversion of 7-carboxy-7-deazaguanine (CDG) to 7-cyano-7-deazaguanine (preQ(0)). The polypeptide is 7-cyano-7-deazaguanine synthase (Dechloromonas aromatica (strain RCB)).